The sequence spans 224 residues: DNA mismatch repair protein MutH (224 aa).

The protein belongs to the MutH family.

Its subcellular location is the cytoplasm. Sequence-specific endonuclease that cleaves unmethylated GATC sequences. It is involved in DNA mismatch repair. The polypeptide is DNA mismatch repair protein MutH (Histophilus somni (strain 129Pt) (Haemophilus somnus)).